The primary structure comprises 561 residues: Dihydroxy-acid dehydratase (561 aa).

C50 contributes to the [2Fe-2S] cluster binding site. Mg(2+) is bound at residue D82. C123 provides a ligand contact to [2Fe-2S] cluster. D124 and K125 together coordinate Mg(2+). K125 is subject to N6-carboxylysine. C195 is a [2Fe-2S] cluster binding site. E447 contacts Mg(2+). S473 (proton acceptor) is an active-site residue.

Belongs to the IlvD/Edd family. In terms of assembly, homodimer. It depends on [2Fe-2S] cluster as a cofactor. Requires Mg(2+) as cofactor.

It carries out the reaction (2R)-2,3-dihydroxy-3-methylbutanoate = 3-methyl-2-oxobutanoate + H2O. It catalyses the reaction (2R,3R)-2,3-dihydroxy-3-methylpentanoate = (S)-3-methyl-2-oxopentanoate + H2O. Its pathway is amino-acid biosynthesis; L-isoleucine biosynthesis; L-isoleucine from 2-oxobutanoate: step 3/4. It functions in the pathway amino-acid biosynthesis; L-valine biosynthesis; L-valine from pyruvate: step 3/4. Its function is as follows. Functions in the biosynthesis of branched-chain amino acids. Catalyzes the dehydration of (2R,3R)-2,3-dihydroxy-3-methylpentanoate (2,3-dihydroxy-3-methylvalerate) into 2-oxo-3-methylpentanoate (2-oxo-3-methylvalerate) and of (2R)-2,3-dihydroxy-3-methylbutanoate (2,3-dihydroxyisovalerate) into 2-oxo-3-methylbutanoate (2-oxoisovalerate), the penultimate precursor to L-isoleucine and L-valine, respectively. This Synechocystis sp. (strain ATCC 27184 / PCC 6803 / Kazusa) protein is Dihydroxy-acid dehydratase.